Here is a 152-residue protein sequence, read N- to C-terminus: SsrA-binding protein (152 aa).

The protein belongs to the SmpB family.

The protein resides in the cytoplasm. In terms of biological role, required for rescue of stalled ribosomes mediated by trans-translation. Binds to transfer-messenger RNA (tmRNA), required for stable association of tmRNA with ribosomes. tmRNA and SmpB together mimic tRNA shape, replacing the anticodon stem-loop with SmpB. tmRNA is encoded by the ssrA gene; the 2 termini fold to resemble tRNA(Ala) and it encodes a 'tag peptide', a short internal open reading frame. During trans-translation Ala-aminoacylated tmRNA acts like a tRNA, entering the A-site of stalled ribosomes, displacing the stalled mRNA. The ribosome then switches to translate the ORF on the tmRNA; the nascent peptide is terminated with the 'tag peptide' encoded by the tmRNA and targeted for degradation. The ribosome is freed to recommence translation, which seems to be the essential function of trans-translation. This Gloeobacter violaceus (strain ATCC 29082 / PCC 7421) protein is SsrA-binding protein.